A 432-amino-acid chain; its full sequence is MSVITDIHAREVLDSRGNPTVEAEVYTELGGFGRAIVPSGASTGEHEAVELRDGDKSRFLGQGVLTAVENVNGEIAKAVIGLDVTDQRLIDQTMIDLDGTPNKGRLGANAMLAVSLASARAAADELGLPLYEYLGGPNAHVLPTPMMNVINGGKHADNNVDIQEFMIMPVGAKSLHEAVRMGAETFHTLKSLLQERGESTAVGDEGGFAPNLKNNEEPFEILVEAIQRAGYKPGQDISIAFDCAASEFYNKDTKKYVTVADGREYTAEEWTSLMEDIVDKYPVISIEDPLDENDWEGWKVFTERLGDKVQIVGDDLFVTNTNYLEKGIKMGVANSILIKLNQIGTLTETFEAIEMAKEAGYTAVVSHRSGETEDTTIADLVVATNAGQIKTGSMSRTDRIAKYNQLMRIEEALGSTAQYKGIHSFYNLHKQF.

Gln-163 lines the (2R)-2-phosphoglycerate pocket. Glu-205 (proton donor) is an active-site residue. Mg(2+) contacts are provided by Asp-242, Glu-287, and Asp-314. Lys-339, Arg-368, Ser-369, and Lys-390 together coordinate (2R)-2-phosphoglycerate. Residue Lys-339 is the Proton acceptor of the active site.

Belongs to the enolase family. It depends on Mg(2+) as a cofactor.

The protein resides in the cytoplasm. The protein localises to the secreted. It localises to the cell surface. The enzyme catalyses (2R)-2-phosphoglycerate = phosphoenolpyruvate + H2O. It participates in carbohydrate degradation; glycolysis; pyruvate from D-glyceraldehyde 3-phosphate: step 4/5. Functionally, catalyzes the reversible conversion of 2-phosphoglycerate (2-PG) into phosphoenolpyruvate (PEP). It is essential for the degradation of carbohydrates via glycolysis. In Lactobacillus johnsonii (strain CNCM I-12250 / La1 / NCC 533), this protein is Enolase 1.